The sequence spans 225 residues: ATP synthase F(0) complex subunit a (225 aa).

6 helical membrane passes run 10 to 30, 69 to 89, 96 to 116, 135 to 155, 168 to 188, and 194 to 214; these read PSLLGISLLMPALLMTTILLL, LILISLLILLSLTNLLGLLPY, QLSMNMAIALPLWLVTVLIGL, LLIPILILIETISLLIRPIAL, LLIQLISIATLNLWFMMPPLS, and VLILLLLLEFAVAMIQAYVFV.

This sequence belongs to the ATPase A chain family. Component of the ATP synthase complex composed at least of ATP5F1A/subunit alpha, ATP5F1B/subunit beta, ATP5MC1/subunit c (homooctomer), MT-ATP6/subunit a, MT-ATP8/subunit 8, ATP5ME/subunit e, ATP5MF/subunit f, ATP5MG/subunit g, ATP5MK/subunit k, ATP5MJ/subunit j, ATP5F1C/subunit gamma, ATP5F1D/subunit delta, ATP5F1E/subunit epsilon, ATP5PF/subunit F6, ATP5PB/subunit b, ATP5PD/subunit d, ATP5PO/subunit OSCP. ATP synthase complex consists of a soluble F(1) head domain (subunits alpha(3) and beta(3)) - the catalytic core - and a membrane F(0) domain - the membrane proton channel (subunits c, a, 8, e, f, g, k and j). These two domains are linked by a central stalk (subunits gamma, delta, and epsilon) rotating inside the F1 region and a stationary peripheral stalk (subunits F6, b, d, and OSCP). Interacts with DNAJC30; interaction is direct.

It localises to the mitochondrion inner membrane. The catalysed reaction is H(+)(in) = H(+)(out). Its function is as follows. Subunit a, of the mitochondrial membrane ATP synthase complex (F(1)F(0) ATP synthase or Complex V) that produces ATP from ADP in the presence of a proton gradient across the membrane which is generated by electron transport complexes of the respiratory chain. ATP synthase complex consist of a soluble F(1) head domain - the catalytic core - and a membrane F(1) domain - the membrane proton channel. These two domains are linked by a central stalk rotating inside the F(1) region and a stationary peripheral stalk. During catalysis, ATP synthesis in the catalytic domain of F(1) is coupled via a rotary mechanism of the central stalk subunits to proton translocation. With the subunit c (ATP5MC1), forms the proton-conducting channel in the F(0) domain, that contains two crucial half-channels (inlet and outlet) that facilitate proton movement from the mitochondrial intermembrane space (IMS) into the matrix. Protons are taken up via the inlet half-channel and released through the outlet half-channel, following a Grotthuss mechanism. The sequence is that of ATP synthase F(0) complex subunit a from Alligator mississippiensis (American alligator).